A 151-amino-acid chain; its full sequence is uncharacterized protein (151 aa).

A disordered region spans residues 122–151; it reads GVAQRQVPTTGTHSFFHCTSEGNKEKPHHF.

This is an uncharacterized protein from Homo sapiens (Human).